Reading from the N-terminus, the 158-residue chain is Transcription elongation factor GreA (158 aa).

It belongs to the GreA/GreB family.

In terms of biological role, necessary for efficient RNA polymerase transcription elongation past template-encoded arresting sites. The arresting sites in DNA have the property of trapping a certain fraction of elongating RNA polymerases that pass through, resulting in locked ternary complexes. Cleavage of the nascent transcript by cleavage factors such as GreA or GreB allows the resumption of elongation from the new 3'terminus. GreA releases sequences of 2 to 3 nucleotides. The polypeptide is Transcription elongation factor GreA (Allorhizobium ampelinum (strain ATCC BAA-846 / DSM 112012 / S4) (Agrobacterium vitis (strain S4))).